A 505-amino-acid polypeptide reads, in one-letter code: Mannosyl-oligosaccharide alpha-1,2-mannosidase 1B (505 aa).

The signal sequence occupies residues 1–16; it reads MRTLLALAALAGFAAA. N88 and N174 each carry an N-linked (GlcNAc...) asparagine glycan. C325 and C354 are joined by a disulfide. An N-linked (GlcNAc...) asparagine glycan is attached at N359. Catalysis depends on E368, which acts as the Proton donor. Residue T494 coordinates Ca(2+).

The protein belongs to the glycosyl hydrolase 47 family. In terms of assembly, monomer. Requires Ca(2+) as cofactor. Mg(2+) serves as cofactor.

The protein localises to the cytoplasmic vesicle lumen. It carries out the reaction N(4)-(alpha-D-Man-(1-&gt;2)-alpha-D-Man-(1-&gt;2)-alpha-D-Man-(1-&gt;3)-[alpha-D-Man-(1-&gt;2)-alpha-D-Man-(1-&gt;3)-[alpha-D-Man-(1-&gt;2)-alpha-D-Man-(1-&gt;6)]-alpha-D-Man-(1-&gt;6)]-beta-D-Man-(1-&gt;4)-beta-D-GlcNAc-(1-&gt;4)-beta-D-GlcNAc)-L-asparaginyl-[protein] (N-glucan mannose isomer 9A1,2,3B1,2,3) + 4 H2O = N(4)-(alpha-D-Man-(1-&gt;3)-[alpha-D-Man-(1-&gt;3)-[alpha-D-Man-(1-&gt;6)]-alpha-D-Man-(1-&gt;6)]-beta-D-Man-(1-&gt;4)-beta-D-GlcNAc-(1-&gt;4)-beta-D-GlcNAc)-L-asparaginyl-[protein] (N-glucan mannose isomer 5A1,2) + 4 beta-D-mannose. The enzyme catalyses N(4)-(alpha-D-Man-(1-&gt;2)-alpha-D-Man-(1-&gt;2)-alpha-D-Man-(1-&gt;3)-[alpha-D-Man-(1-&gt;3)-[alpha-D-Man-(1-&gt;2)-alpha-D-Man-(1-&gt;6)]-alpha-D-Man-(1-&gt;6)]-beta-D-Man-(1-&gt;4)-beta-D-GlcNAc-(1-&gt;4)-beta-D-GlcNAc)-L-asparaginyl-[protein] (N-glucan mannose isomer 8A1,2,3B1,3) + 3 H2O = N(4)-(alpha-D-Man-(1-&gt;3)-[alpha-D-Man-(1-&gt;3)-[alpha-D-Man-(1-&gt;6)]-alpha-D-Man-(1-&gt;6)]-beta-D-Man-(1-&gt;4)-beta-D-GlcNAc-(1-&gt;4)-beta-D-GlcNAc)-L-asparaginyl-[protein] (N-glucan mannose isomer 5A1,2) + 3 beta-D-mannose. It functions in the pathway protein modification; protein glycosylation. Its function is as follows. Involved in the maturation of Asn-linked oligosaccharides. Progressively trims alpha-1,2-linked mannose residues from Man(9)GlcNAc(2) to produce Man(5)GlcNAc(2). In Emericella nidulans (strain FGSC A4 / ATCC 38163 / CBS 112.46 / NRRL 194 / M139) (Aspergillus nidulans), this protein is Mannosyl-oligosaccharide alpha-1,2-mannosidase 1B (mns1B).